The primary structure comprises 176 residues: Inorganic pyrophosphatase (176 aa).

3 residues coordinate substrate: K31, R45, and Y57. Mg(2+) is bound by residues D67, D72, and D104. Y141 provides a ligand contact to substrate.

The protein belongs to the PPase family. Homohexamer. The cofactor is Mg(2+).

It localises to the cytoplasm. It catalyses the reaction diphosphate + H2O = 2 phosphate + H(+). Its function is as follows. Catalyzes the hydrolysis of inorganic pyrophosphate (PPi) forming two phosphate ions. The polypeptide is Inorganic pyrophosphatase (Methanopyrus kandleri (strain AV19 / DSM 6324 / JCM 9639 / NBRC 100938)).